We begin with the raw amino-acid sequence, 303 residues long: MTDDQDCAAELEKVDSSSEDGVDAKPDRSSIISSILLKKKRNASAGPVRTGRDRVPTYLYRMDFQKMGKCIIINNKNFDKATGMDVRNGTDKDAGALFKCFQNLGFEVTVHNDCSCAKMQDLLRKASEEDHSNSACFACVLLSHGEEDLIYGKDGVTPIKDLTAHFRGDRCKTLLEKPKLFFIQACRGTELDDGIQADSGPINDIDANPRNKIPVEADFLFAYSTVPGYYSWRNPGKGSWFVQALCSILNEHGKDLEIMQILTRVNDRVARHFESQSDDPRFNEKKQIPCMVSMLTKELYFSR.

M1 bears the N-acetylmethionine mark. Positions 1–23 (MTDDQDCAAELEKVDSSSEDGVD) are excised as a propeptide. Residues 1-26 (MTDDQDCAAELEKVDSSSEDGVDAKP) form a disordered region. A compositionally biased stretch (basic and acidic residues) spans 10 to 26 (ELEKVDSSSEDGVDAKP). S30 bears the Phosphoserine mark. The tract at residues 38-41 (KKKR) is exosite. The tract at residues 76–87 (KNFDKATGMDVR) is loop L1. The active site involves H144. T173 is subject to Phosphothreonine. C186 is an active-site residue. The tract at residues 187–196 (RGTELDDGIQ) is loop L2. A propeptide spanning residues 199–206 (SGPINDID) is cleaved from the precursor. The segment at 226–238 (VPGYYSWRNPGKG) is loop L3. At S239 the chain carries Phosphoserine. The segment at 274–288 (ESQSDDPRFNEKKQI) is loop L4.

Belongs to the peptidase C14A family. Heterotetramer that consists of two anti-parallel arranged heterodimers, each one formed by a 20 kDa (p20) and a 11 kDa (p11) subunit. Interacts with XIAP (via its second BIR domain); inhibiting CASP7 activity. Interacts with BIRC6/bruce. Interacts with ATXN3 (short isoform 1). Interacts with HSPA5. Post-translationally, cleavage by different proteases, such as granzyme B (GZMB), caspase-1 (CASP1), caspase-8 (CASP8) or caspase-9 (CASP9) generate the two active subunits. Its involvement in different programmed cell death processes is probably specified by the protease that activates CASP7. Cleaved and activated by initiator caspases (CASP8 and/or CASP9), leading to execution phase of apoptosis. Cleavage and maturation by GZMB regulates granzyme-mediated programmed cell death. Cleaved and activated by CASP1 in response to bacterial infection. Propeptide domains can also be cleaved efficiently by CASP3. Active heterodimers between the small subunit of caspase-7 and the large subunit of CASP3, and vice versa, also occur. Also cleaved at the N-terminus at alternative sites by CAPN1, leading to its activation. Phosphorylation at Ser-30 and Ser-239 by PAK2 inhibits its activity. Phosphorylation at Ser-30 prevents cleavage and activation by initiator caspase CASP9, while phosphorylation at Ser-239 prevents thiol protease activity by preventing substrate-binding. In terms of processing, ubiquitinated by BIRC6; this activity is inhibited by DIABLO/SMAC. Highly expressed in heart, lung, liver and kidney. Low levels in spleen, skeletal muscle and testis. No expression in the brain.

It localises to the cytoplasm. Its subcellular location is the cytosol. The protein resides in the nucleus. The protein localises to the secreted. It is found in the extracellular space. The enzyme catalyses Strict requirement for an Asp residue at position P1 and has a preferred cleavage sequence of Asp-Glu-Val-Asp-|-.. Its activity is regulated as follows. During activation, the N-terminal disordered prodomain is removed by cleavage. Concomitantly, double cleavage gives rise to a large Caspase-7 subunit p20 and a small Caspase-7 subunit p11. The two large and two small subunits then assemble to form the active CASP7 complex. Can be cleaved and activated by different caspases, depending on the context. Cleaved and activated by initiator caspases (CASP8 and/or CASP9), leading to execution phase of apoptosis. Cleavage and maturation by GZMB regulates granzyme-mediated programmed cell death. Cleavage and maturation by CASP1 regulates pyroptosis. Inhibited by XIAP, which directly binds to the active site pocket and obstructs substrate entry. Phosphorylation at Ser-30 and Ser-239 by PAK2 inhibits its activity. Inhibited by BIRC6; following inhibition of BIRC6-caspase binding by DIABLO/SMAC, BIRC6 is subjected to caspase cleavage, leading to an increase in active caspases. Thiol protease involved in different programmed cell death processes, such as apoptosis, pyroptosis or granzyme-mediated programmed cell death, by proteolytically cleaving target proteins. Has a marked preference for Asp-Glu-Val-Asp (DEVD) consensus sequences, with some plasticity for alternate non-canonical sequences. Its involvement in the different programmed cell death processes is probably determined by upstream proteases that activate CASP7. Acts as an effector caspase involved in the execution phase of apoptosis: following cleavage and activation by initiator caspases (CASP8 and/or CASP9), mediates execution of apoptosis by catalyzing cleavage of proteins, such as CLSPN, PARP1, PTGES3 and YY1. Compared to CASP3, acts as a minor executioner caspase and cleaves a limited set of target proteins. Acts as a key regulator of the inflammatory response in response to bacterial infection by catalyzing cleavage and activation of the sphingomyelin phosphodiesterase SMPD1 in the extracellular milieu, thereby promoting membrane repair. Regulates pyroptosis in intestinal epithelial cells: cleaved and activated by CASP1 in response to S.typhimurium infection, promoting its secretion to the extracellular milieu, where it catalyzes activation of SMPD1, generating ceramides that repair membranes and counteract the action of gasdermin-D (GSDMD) pores. Regulates granzyme-mediated programmed cell death in hepatocytes: cleaved and activated by granzyme B (GZMB) in response to bacterial infection, promoting its secretion to the extracellular milieu, where it catalyzes activation of SMPD1, generating ceramides that repair membranes and counteract the action of perforin (PRF1) pores. Following cleavage by CASP1 in response to inflammasome activation, catalyzes processing and inactivation of PARP1, alleviating the transcription repressor activity of PARP1. Acts as an inhibitor of type I interferon production during virus-induced apoptosis by mediating cleavage of antiviral proteins CGAS, IRF3 and MAVS, thereby preventing cytokine overproduction. Cleaves and activates sterol regulatory element binding proteins (SREBPs). Cleaves phospholipid scramblase proteins XKR4, XKR8 and XKR9. Cleaves BIRC6 following inhibition of BIRC6-caspase binding by DIABLO/SMAC. The sequence is that of Caspase-7 from Mus musculus (Mouse).